The chain runs to 128 residues: Ribonuclease pancreatic (128 aa).

Residues K1–M13 are compositionally biased toward basic and acidic residues. The interval K1–C26 is disordered. Positions 7 and 10 each coordinate substrate. Catalysis depends on H12, which acts as the Proton acceptor. The segment covering D14 to C26 has biased composition (polar residues). Cystine bridges form between C26/C84, C40/C95, C58/C110, and C65/C72. The N-linked (GlcNAc...) asparagine glycan is linked to N34. K41–T45 lines the substrate pocket. N62 carries N-linked (GlcNAc...) asparagine glycosylation. Residues K66 and R85 each contribute to the substrate site. Residue H119 is the Proton donor of the active site.

This sequence belongs to the pancreatic ribonuclease family. In terms of assembly, monomer. Interacts with and forms tight 1:1 complexes with RNH1. Dimerization of two such complexes may occur. Interaction with RNH1 inhibits this protein. As to expression, pancreas.

Its subcellular location is the secreted. The catalysed reaction is an [RNA] containing cytidine + H2O = an [RNA]-3'-cytidine-3'-phosphate + a 5'-hydroxy-ribonucleotide-3'-[RNA].. It catalyses the reaction an [RNA] containing uridine + H2O = an [RNA]-3'-uridine-3'-phosphate + a 5'-hydroxy-ribonucleotide-3'-[RNA].. Functionally, endonuclease that catalyzes the cleavage of RNA on the 3' side of pyrimidine nucleotides. Acts on single-stranded and double-stranded RNA. The polypeptide is Ribonuclease pancreatic (RNASE1) (Equus caballus (Horse)).